Consider the following 358-residue polypeptide: Methionine aminopeptidase 2 (358 aa).

Position 109 (H109) interacts with substrate. Residues D130, D141, and H210 each contribute to the a divalent metal cation site. A substrate-binding site is contributed by H218. A divalent metal cation-binding residues include E243 and E339.

This sequence belongs to the peptidase M24A family. Methionine aminopeptidase eukaryotic type 2 subfamily. Co(2+) is required as a cofactor. Zn(2+) serves as cofactor. It depends on Mn(2+) as a cofactor. Requires Fe(2+) as cofactor.

The protein localises to the cytoplasm. It carries out the reaction Release of N-terminal amino acids, preferentially methionine, from peptides and arylamides.. Its activity is regulated as follows. Irreversibly inhibited by the fungal metabolite fumagillin and the fumagillin analog TNP470, antiangiogenic drugs. In terms of biological role, cotranslationally removes the N-terminal methionine from nascent proteins. The N-terminal methionine is often cleaved when the second residue in the primary sequence is small and uncharged (Met-Ala-, Cys, Gly, Pro, Ser, Thr, or Val). This chain is Methionine aminopeptidase 2, found in Encephalitozoon hellem (strain ATCC 50504) (Microsporidian parasite).